The chain runs to 213 residues: StAR-related lipid transfer protein 5 (213 aa).

The START domain occupies 1-213 (MDLATAAQVS…LEKAVKKFFG (213 aa)).

Functionally, may be involved in the intracellular transport of sterols or other lipids. May bind cholesterol or other sterols. In Bos taurus (Bovine), this protein is StAR-related lipid transfer protein 5 (STARD5).